The following is a 314-amino-acid chain: tRNA dimethylallyltransferase (314 aa).

12–19 (GPTASGKT) contacts ATP. 14–19 (TASGKT) serves as a coordination point for substrate. 2 interaction with substrate tRNA regions span residues 37 to 40 (DSAQ) and 161 to 165 (QRIQR).

The protein belongs to the IPP transferase family. Monomer. Requires Mg(2+) as cofactor.

The catalysed reaction is adenosine(37) in tRNA + dimethylallyl diphosphate = N(6)-dimethylallyladenosine(37) in tRNA + diphosphate. Its function is as follows. Catalyzes the transfer of a dimethylallyl group onto the adenine at position 37 in tRNAs that read codons beginning with uridine, leading to the formation of N6-(dimethylallyl)adenosine (i(6)A). The chain is tRNA dimethylallyltransferase from Nitrosococcus oceani (strain ATCC 19707 / BCRC 17464 / JCM 30415 / NCIMB 11848 / C-107).